We begin with the raw amino-acid sequence, 191 residues long: Pentapeptide repeat protein MfpA (191 aa).

The Pentapeptide repeat domain occupies 115–154 (CRLREVSLVGADLRKAVLRRADLTGSRVQDARLEEADLRG).

This sequence belongs to the pentapeptide repeat protein family. As to quaternary structure, homodimer. Probably interacts with DNA gyrase.

In terms of biological role, when present on multicopy plasmids confers increased resistance to fluoroquinolone antibiotics such as ciprofloxacin and sparfloxacin but not the quinolone nalidixic acid. Forms a structure that exhibits size, shape and electrostatic similarity to B-form DNA; it may bind to DNA gyrase which is postulated to protect it from fluoroquinolones. The polypeptide is Pentapeptide repeat protein MfpA (Mycolicibacterium smegmatis (strain ATCC 700084 / mc(2)155) (Mycobacterium smegmatis)).